Reading from the N-terminus, the 128-residue chain is 3-aminoacrylate deaminase RutC (128 aa).

This sequence belongs to the RutC family.

It catalyses the reaction (Z)-3-aminoacrylate + H2O + H(+) = 3-oxopropanoate + NH4(+). Involved in pyrimidine catabolism. Catalyzes the deamination of 3-aminoacrylate to malonic semialdehyde, a reaction that can also occur spontaneously. RutC may facilitate the reaction and modulate the metabolic fitness, rather than catalyzing essential functions. The chain is 3-aminoacrylate deaminase RutC from Enterobacter sp. (strain 638).